The primary structure comprises 251 residues: Transcription initiation factor TFIID subunit 9B (251 aa).

Methionine 1 carries the post-translational modification N-acetylmethionine. Phosphoserine is present on serine 147. Phosphothreonine occurs at positions 159 and 174. Position 177 is a phosphoserine (serine 177). The disordered stretch occupies residues 229–251; sequence QNTANEANPLKRKHEDDDDNDIM.

The protein belongs to the TAF9 family. As to quaternary structure, binds TAF5 and TAF6. Component of TFIID and the TATA-binding protein-free TAF complex (TFTC). TFIID is composed of TATA binding protein (TBP) and a number of TBP-associated factors (TAFs). Binds N-terminal domain of p53/TP53 which is essential for transcription.

It localises to the nucleus. Its function is as follows. Essential for cell viability. TAF9 and TAF9B are involved in transcriptional activation as well as repression of distinct but overlapping sets of genes. May have a role in gene regulation associated with apoptosis. TAFs are components of the transcription factor IID (TFIID) complex, the TBP-free TAFII complex (TFTC), the PCAF histone acetylase complex and the STAGA transcription coactivator-HAT complex. TFIID or TFTC are essential for the regulation of RNA polymerase II-mediated transcription. In Homo sapiens (Human), this protein is Transcription initiation factor TFIID subunit 9B (TAF9B).